We begin with the raw amino-acid sequence, 518 residues long: Crotonobetaine/carnitine--CoA ligase (518 aa).

It belongs to the ATP-dependent AMP-binding enzyme family.

The enzyme catalyses 4-(trimethylamino)butanoate + ATP + CoA = 4-(trimethylamino)butanoyl-CoA + AMP + diphosphate. The catalysed reaction is crotonobetaine + ATP + CoA = crotonobetainyl-CoA + AMP + diphosphate. It carries out the reaction (R)-carnitine + ATP + CoA = (R)-carnitinyl-CoA + AMP + diphosphate. It functions in the pathway amine and polyamine metabolism; carnitine metabolism. Its function is as follows. Catalyzes the transfer of CoA to carnitine, generating the initial carnitinyl-CoA needed for the CaiB reaction cycle. Also has activity toward crotonobetaine and gamma-butyrobetaine. This is Crotonobetaine/carnitine--CoA ligase from Proteus mirabilis (strain HI4320).